Consider the following 159-residue polypeptide: Transcription elongation factor A protein-like 1 (159 aa).

Residues 1 to 120 (MEKACKEPEE…PQFRGDIHGR (120 aa)) form a disordered region. The segment covering 17–34 (KADEERPSVEPSPEKSSP) has biased composition (basic and acidic residues). The span at 37-54 (QSSEEVSSEEEFFPDELL) shows a compositional bias: acidic residues. Basic and acidic residues-rich tracts occupy residues 64–80 (SEER…DLFE) and 95–119 (HKLE…DIHG).

Belongs to the TFS-II family. TFA subfamily.

The protein localises to the nucleus. Its function is as follows. May be involved in transcriptional regulation. Modulates various viral and cellular promoters in a promoter context-dependent manner. Does not bind DNA directly. The sequence is that of Transcription elongation factor A protein-like 1 from Bos taurus (Bovine).